The primary structure comprises 258 residues: uncharacterized protein (258 aa).

Positions 1-23 (MVWCHYILLVLTFFLFTTFFTAA) are cleaved as a signal peptide. Topologically, residues 24–64 (CPAIFTWLNSLFRLSNDSPHVVHTSIAEVGDIEDGRVDKDG) are cytoplasmic. The chain crosses the membrane as a helical span at residues 65 to 85 (VLFVDLEFFLGCLPFFFFALV). At 86 to 123 (DQSSSSSVCKPLSPSDAKRSSNSLLRLSLVSSNDSDSS) the chain is on the extracellular side. Asn118 is a glycosylation site (N-linked (GlcNAc...) asparagine). Residues 124–144 (VSVSTFAFFFFFLFFLFFVFT) traverse the membrane as a helical segment. At 145 to 230 (CTFSSELTSS…SSSISFRISS (86 aa)) the chain is on the cytoplasmic side. Residues 231–251 (IFFLCSLVFMWFFNCFSDLNV) form a helical membrane-spanning segment. Residues 252–258 (LLQIKHS) lie on the Extracellular side of the membrane.

Its subcellular location is the membrane. This is an uncharacterized protein from Saccharomyces cerevisiae (strain ATCC 204508 / S288c) (Baker's yeast).